A 161-amino-acid chain; its full sequence is MDSPGRRSGSAMSLRKLGLVVAIFFFMMGTTVVVLYKYLNAKSSGGTEQKPEGAFGIPLRKESSRLRPNGGERMSILSMDAEHVRRLFDVLFEDINNAKEAYEDIMNLLEEYKVKRGISKKTKSFIDMLLSFLKSAPGTESEDIKILKSLANIVAKHYLKK.

The chain crosses the membrane as a helical span at residues 16 to 36 (KLGLVVAIFFFMMGTTVVVLY).

The protein localises to the membrane. This is an uncharacterized protein from Encephalitozoon cuniculi (strain GB-M1) (Microsporidian parasite).